A 159-amino-acid polypeptide reads, in one-letter code: Ribosomal RNA large subunit methyltransferase H (159 aa).

S-adenosyl-L-methionine contacts are provided by residues Leu-76, Gly-107, and 126-131 (LSSLTL).

It belongs to the RNA methyltransferase RlmH family. As to quaternary structure, homodimer.

The protein resides in the cytoplasm. The catalysed reaction is pseudouridine(1915) in 23S rRNA + S-adenosyl-L-methionine = N(3)-methylpseudouridine(1915) in 23S rRNA + S-adenosyl-L-homocysteine + H(+). Specifically methylates the pseudouridine at position 1915 (m3Psi1915) in 23S rRNA. This chain is Ribosomal RNA large subunit methyltransferase H, found in Cupriavidus necator (strain ATCC 17699 / DSM 428 / KCTC 22496 / NCIMB 10442 / H16 / Stanier 337) (Ralstonia eutropha).